The sequence spans 331 residues: MIAMGLEGSANKLGVGIMRDDEILANERLTYAPPPGEGFIPVKTAEHHRSRILGLVAVSLEKAGVDLDDVDIFCYTKGPGMGLPLSVVATVARTLSLYCNKPLVPVNHCIAHIEMGRFITKASNPVILYASGGNTQIIAYHNRRYKIFGETLDIAVGNCIDRFARALKLPNFPAPGLSVERYAKLGKNYIELPYVVKGMDVSFSGILSNIKRKIAEDEQVKRDLCYSLQETVFSALVEVTERAMAFSSSKEVLIVGGVGCNLRLQEMMGIMARERGGVCYATDERFCIDNGVMIAYVGMLMAKSGAAFKLGECFVTQRYRTDSVEVTWRDY.

A divalent metal cation contacts are provided by histidine 108, histidine 112, and tyrosine 129. Residues 129–133 (YASGG), aspartate 161, glycine 176, glutamate 180, and asparagine 261 contribute to the substrate site. Aspartate 289 is an a divalent metal cation binding site.

The protein belongs to the KAE1 / TsaD family. In terms of assembly, component of the EKC/KEOPS complex composed of at least BUD32, CGI121, GON7, KAE1 and PCC1; the whole complex dimerizes. A divalent metal cation is required as a cofactor.

The protein localises to the cytoplasm. It is found in the nucleus. It carries out the reaction L-threonylcarbamoyladenylate + adenosine(37) in tRNA = N(6)-L-threonylcarbamoyladenosine(37) in tRNA + AMP + H(+). Component of the EKC/KEOPS complex that is required for the formation of a threonylcarbamoyl group on adenosine at position 37 (t(6)A37) in tRNAs that read codons beginning with adenine. The complex is probably involved in the transfer of the threonylcarbamoyl moiety of threonylcarbamoyl-AMP (TC-AMP) to the N6 group of A37. KAE1 likely plays a direct catalytic role in this reaction, but requires other protein(s) of the complex to fulfill this activity. The EKC/KEOPS complex also promotes both telomere uncapping and telomere elongation. The complex is required for efficient recruitment of transcriptional coactivators. This is tRNA N6-adenosine threonylcarbamoyltransferase from Encephalitozoon cuniculi (strain GB-M1) (Microsporidian parasite).